The primary structure comprises 199 residues: Protein-L-isoaspartate O-methyltransferase (199 aa).

Ser51 is an active-site residue.

The protein belongs to the methyltransferase superfamily. L-isoaspartyl/D-aspartyl protein methyltransferase family.

Its subcellular location is the cytoplasm. The enzyme catalyses [protein]-L-isoaspartate + S-adenosyl-L-methionine = [protein]-L-isoaspartate alpha-methyl ester + S-adenosyl-L-homocysteine. Its function is as follows. Catalyzes the methyl esterification of L-isoaspartyl residues in peptides and proteins that result from spontaneous decomposition of normal L-aspartyl and L-asparaginyl residues. It plays a role in the repair and/or degradation of damaged proteins. In Fervidobacterium nodosum (strain ATCC 35602 / DSM 5306 / Rt17-B1), this protein is Protein-L-isoaspartate O-methyltransferase.